Consider the following 387-residue polypeptide: MIRYYQQQLADLKAQNQFRQLPQLIHRGRFIQREDNTMLNMSSNDYLGLANNEALRQAFFTQYQDQLPALTSSSSRLLTGSFPIYDELESLMAQAFGRETALLFNSGYHANIGILPALADKKTLIVADKLVHASMIDGIRLAQCEFVRFRHHDYAHLEQILQKNDRTFERIIVVTESVFSMDGDCADLTQLVALKQRYPQVMLYVDEAHAIGVLGEKGLGLAEQQGCINQIDILVGTFGKALGSMGAYVICDQVIRDYLVNKMRPLIFSTALPPFNVAWTHFVFQQLPHLQAERAHLAQLSQHLRQAIVDIFQVPMPSESCIVPYILGDNELTVRTAQRLQQQGYYCLPIRPPTVPKGTSRIRFSLTADMQVAEVEQFIACLQELAE.

Position 19 (Arg19) interacts with substrate. A pyridoxal 5'-phosphate-binding site is contributed by 107-108; sequence GY. Substrate is bound at residue His132. Pyridoxal 5'-phosphate-binding positions include Ser180, 206–209, and 237–240; these read DEAH and TFGK. The residue at position 240 (Lys240) is an N6-(pyridoxal phosphate)lysine. Position 354 (Thr354) interacts with substrate.

It belongs to the class-II pyridoxal-phosphate-dependent aminotransferase family. BioF subfamily. As to quaternary structure, homodimer. The cofactor is pyridoxal 5'-phosphate.

It catalyses the reaction 6-carboxyhexanoyl-[ACP] + L-alanine + H(+) = (8S)-8-amino-7-oxononanoate + holo-[ACP] + CO2. Its pathway is cofactor biosynthesis; biotin biosynthesis. Catalyzes the decarboxylative condensation of pimeloyl-[acyl-carrier protein] and L-alanine to produce 8-amino-7-oxononanoate (AON), [acyl-carrier protein], and carbon dioxide. In Pasteurella multocida (strain Pm70), this protein is Putative 8-amino-7-oxononanoate synthase (bioF).